Here is a 705-residue protein sequence, read N- to C-terminus: Tryptophan synthase (705 aa).

Positions M1–K293 are tryptophan synthase alpha chain. Residues E49 and D60 each act as proton acceptor in the active site. The tract at residues K266–P287 is disordered. Residues G294–K705 are tryptophan synthase beta chain. At K381 the chain carries N6-(pyridoxal phosphate)lysine.

In the N-terminal section; belongs to the TrpA family. This sequence in the C-terminal section; belongs to the TrpB family. Requires pyridoxal 5'-phosphate as cofactor.

It catalyses the reaction (1S,2R)-1-C-(indol-3-yl)glycerol 3-phosphate + L-serine = D-glyceraldehyde 3-phosphate + L-tryptophan + H2O. It functions in the pathway amino-acid biosynthesis; L-tryptophan biosynthesis; L-tryptophan from chorismate: step 5/5. The chain is Tryptophan synthase (TRP-1) from Coprinopsis cinerea (Inky cap fungus).